Reading from the N-terminus, the 128-residue chain is Aspartate 1-decarboxylase (128 aa).

Ser25 (schiff-base intermediate with substrate; via pyruvic acid) is an active-site residue. Pyruvic acid (Ser) is present on Ser25. Residue Thr57 coordinates substrate. Tyr58 (proton donor) is an active-site residue. Gly73 to Ala75 is a binding site for substrate.

Belongs to the PanD family. As to quaternary structure, heterooctamer of four alpha and four beta subunits. Pyruvate serves as cofactor. Is synthesized initially as an inactive proenzyme, which is activated by self-cleavage at a specific serine bond to produce a beta-subunit with a hydroxyl group at its C-terminus and an alpha-subunit with a pyruvoyl group at its N-terminus.

The protein resides in the cytoplasm. It catalyses the reaction L-aspartate + H(+) = beta-alanine + CO2. Its pathway is cofactor biosynthesis; (R)-pantothenate biosynthesis; beta-alanine from L-aspartate: step 1/1. Catalyzes the pyruvoyl-dependent decarboxylation of aspartate to produce beta-alanine. The protein is Aspartate 1-decarboxylase of Chlorobium phaeovibrioides (strain DSM 265 / 1930) (Prosthecochloris vibrioformis (strain DSM 265)).